A 477-amino-acid polypeptide reads, in one-letter code: Otolin-1 (477 aa).

The signal sequence occupies residues 1–23 (MWMFSWLCAILIILAIAGMNTIA). Disordered regions lie at residues 28–55 (HTKF…PEEE) and 111–337 (QKGE…KGEL). A compositionally biased stretch (basic and acidic residues) spans 33–42 (KKSEEREMPK). The Collagen-like 1 domain occupies 116–175 (GETGQPGPKGEAGNLGIPGPPGVVGPQGPRGYKGEKGLKGERGDQGVPGYPGKPGAQGEP). 2 positions are modified to hydroxyproline: Pro-133 and Pro-136. Basic and acidic residues predominate over residues 147–159 (YKGEKGLKGERGD). A hydroxyproline mark is found at Pro-163, Pro-166, and Pro-169. Lys-178 bears the 5-hydroxylysine mark. The O-linked (Gal...) hydroxylysine glycan is linked to Lys-178. Residues 182-191 (GNIGLGGVKG) show a composition bias toward gly residues. Asn-202 carries N-linked (GlcNAc...) asparagine glycosylation. Collagen-like domains are found at residues 209 to 268 (GDQG…KGSK) and 278 to 337 (GRNG…KGEL). The residue at position 223 (Pro-223) is a Hydroxyproline. Composition is skewed to basic and acidic residues over residues 226–240 (KGEK…EMGD) and 247–277 (SGER…EGKS). Hydroxyproline is present on residues Pro-283 and Pro-301. Over residues 298 to 310 (LGPPGLLGPTGPK) the composition is skewed to low complexity. Lys-310 is subject to 5-hydroxylysine. O-linked (Gal...) hydroxylysine glycosylation is present at Lys-310. The C1q domain occupies 338-473 (ARVPRSAFSA…GFLLYPEETS (136 aa)). Asn-381 is a glycosylation site (N-linked (GlcNAc...) asparagine).

Belongs to the OTOL1 family. As to quaternary structure, homooligomer; disulfide-linked; probably forms homotrimers. Interacts with OC90. Interacts with CBLN1.

Its subcellular location is the secreted. The protein localises to the extracellular space. It is found in the extracellular matrix. Functionally, collagen-like protein specifically expressed in the inner ear, which provides an organic scaffold for otoconia, a calcium carbonate structure in the saccule and utricle of the ear. Acts as a scaffold for biomineralization: sequesters calcium and forms interconnecting fibrils between otoconia that are incorporated into the calcium crystal structure. Together with OC90, modulates calcite crystal morphology and growth kinetics. This Homo sapiens (Human) protein is Otolin-1.